We begin with the raw amino-acid sequence, 317 residues long: tRNA dimethylallyltransferase (317 aa).

14–21 contributes to the ATP binding site; it reads GPTASGKS. Substrate is bound at residue 16-21; sequence TASGKS. Interaction with substrate tRNA stretches follow at residues 39–42 and 163–167; these read DSVL and QRIQR.

The protein belongs to the IPP transferase family. In terms of assembly, monomer. Mg(2+) is required as a cofactor.

It carries out the reaction adenosine(37) in tRNA + dimethylallyl diphosphate = N(6)-dimethylallyladenosine(37) in tRNA + diphosphate. In terms of biological role, catalyzes the transfer of a dimethylallyl group onto the adenine at position 37 in tRNAs that read codons beginning with uridine, leading to the formation of N6-(dimethylallyl)adenosine (i(6)A). This is tRNA dimethylallyltransferase from Xylella fastidiosa (strain M23).